The chain runs to 567 residues: Fanconi anemia group C protein homolog (567 aa).

As to quaternary structure, belongs to the multisubunit FA complex composed of FANCA, FANCB, FANCC, FANCE, FANCF, FANCG, FANCL/PHF9 and FANCM. This complex may also include HSP70. Interacts with ZBTB32. Upon IFNG induction, interacts with STAT1. Interacts with CDK1. Interacts with EIF2AK2.

The protein resides in the nucleus. It localises to the cytoplasm. DNA repair protein that may operate in a postreplication repair or a cell cycle checkpoint function. May be implicated in interstrand DNA cross-link repair and in the maintenance of normal chromosome stability. Upon IFNG induction, may facilitate STAT1 activation by recruiting STAT1 to IFNGR1. The chain is Fanconi anemia group C protein homolog (FANCC) from Bos taurus (Bovine).